The following is a 175-amino-acid chain: MVKDIIKTVTFSCMLAGSMFVTCHVCAAGSVVNITGNVQDNTCDVDINSRNFDVSLGSYDSRQFTAAGDTTPASVFHVGLTSCGSAVRAVKLTFTGTPDNQEAGLIQINSINGARGVGIQLLDKDKHELKINVPTTIALMPGTQTIAFYARLKATYLPVKAGNVDAVVNFVLDYQ.

The signal sequence occupies residues M1–A27. C43 and C83 form a disulfide bridge.

Belongs to the fimbrial protein family.

Its subcellular location is the fimbrium. Functionally, fimbriae (also called pili), polar filaments radiating from the surface of the bacterium to a length of 0.5-1.5 micrometers and numbering 100-300 per cell, enable bacteria to colonize the epithelium of specific host organs. A minor fimbrial subunit. This protein is necessary for full expression of S-specific binding. S-fimbrial adhesins enable pathogenic E.coli causing urinary-tract infections or newborn meningitis to attach to glycoproteins terminating with alpha-sialic acid-(2-3)-beta-Gal. The chain is S-fimbrial protein subunit SfaG (sfaG) from Escherichia coli O6:K15:H31 (strain 536 / UPEC).